Consider the following 66-residue polypeptide: Clusterin (66 aa).

It belongs to the clusterin family. Antiparallel disulfide-linked heterodimer of an alpha chain and a beta chain. Self-associates and forms higher oligomers. Interacts with a broad range of misfolded proteins, including APP, APOC2 and LYZ. Slightly acidic pH promotes interaction with misfolded proteins. Forms high-molecular weight oligomers upon interaction with misfolded proteins. Interacts with APOA1, LRP2, CLUAP1 and PON1. Interacts with the complement membrane attack complex. Interacts (via alpha chain) with XRCC6. Interacts with SYVN1, COMMD1, BTRC, CUL1 and with ubiquitin and SCF (SKP1-CUL1-F-box protein) E3 ubiquitin-protein ligase complexes. Interacts (via alpha chain) with BAX in stressed cells, where BAX undergoes a conformation change leading to association with the mitochondrial membrane. Does not interact with BAX in unstressed cells. Found in a complex with LTF, CLU, EPPIN and SEMG1. Interacts (immaturely glycosylated pre-secreted form) with HSPA5; this interaction promotes CLU stability and facilitates stress-induced CLU retrotranslocation from the secretory pathway to the mitochondria, thereby reducing stress-induced apoptosis by stabilizing mitochondrial membrane integrity. Interacts with BCL2L1; this interaction releases and activates BAX and promotes cell death. Interacts with TGFBR2 and ACVR1. Interacts (secreted form) with STMN3; this interaction may act as an important modulator during neuronal differentiation. Component of a epididymal complex at least composed of soluble form of prion protein PRNP, CLU, BPI, CES5A, MANBA and GLB1. Post-translationally, proteolytically cleaved on its way through the secretory system, probably within the Golgi lumen. Proteolytic cleavage is not necessary for its chaperone activity. All non-secreted forms are not proteolytically cleaved. Chaperone activity of uncleaved forms is dependent on a non-reducing environment. In terms of processing, polyubiquitinated, leading to proteasomal degradation. Under cellular stress, the intracellular level of cleaved form is reduced due to proteasomal degradation. Heavily N-glycosylated. About 30% of the protein mass is comprised of complex N-linked carbohydrate. Endoplasmic reticulum (ER) stress induces changes in glycosylation status and increases level of hypoglycosylated forms. Core carbohydrates are essential for chaperone activity. Non-secreted forms are hypoglycosylated or unglycosylated.

It is found in the secreted. It localises to the nucleus. The protein localises to the cytoplasm. Its subcellular location is the mitochondrion membrane. The protein resides in the cytosol. It is found in the microsome. It localises to the endoplasmic reticulum. The protein localises to the mitochondrion. Its subcellular location is the perinuclear region. The protein resides in the cytoplasmic vesicle. It is found in the secretory vesicle. It localises to the chromaffin granule. Functions as extracellular chaperone that prevents aggregation of non native proteins. Prevents stress-induced aggregation of blood plasma proteins. Inhibits formation of amyloid fibrils by APP, APOC2, B2M, CALCA, CSN3, SNCA and aggregation-prone LYZ variants (in vitro). Does not require ATP. Maintains partially unfolded proteins in a state appropriate for subsequent refolding by other chaperones, such as HSPA8/HSC70. Does not refold proteins by itself. Binding to cell surface receptors triggers internalization of the chaperone-client complex and subsequent lysosomal or proteasomal degradation. When secreted, protects cells against apoptosis and against cytolysis by complement: inhibits assembly of the complement membrane attack complex (MAC) by preventing polymerization of C9 pore component of the MAC complex. Intracellular forms interact with ubiquitin and SCF (SKP1-CUL1-F-box protein) E3 ubiquitin-protein ligase complexes and promote the ubiquitination and subsequent proteasomal degradation of target proteins. Promotes proteasomal degradation of COMMD1 and IKBKB. Modulates NF-kappa-B transcriptional activity. Following stress, promotes apoptosis. Inhibits apoptosis when associated with the mitochondrial membrane by interference with BAX-dependent release of cytochrome c into the cytoplasm. Plays a role in the regulation of cell proliferation. An intracellular form suppresses stress-induced apoptosis by stabilizing mitochondrial membrane integrity through interaction with HSPA5. Secreted form does not affect caspase or BAX-mediated intrinsic apoptosis and TNF-induced NF-kappa-B-activity. Secreted form act as an important modulator during neuronal differentiation through interaction with STMN3. Plays a role in the clearance of immune complexes that arise during cell injury. The protein is Clusterin (CLU) of Ovis aries (Sheep).